Here is a 263-residue protein sequence, read N- to C-terminus: Large ribosomal subunit protein uL23m (263 aa).

The transit peptide at 1–45 (MPRLTVGTKNMLYPLQKTLAVGSCKPEQVPIRSLASVVESSSKIL) directs the protein to the mitochondrion.

The protein belongs to the universal ribosomal protein uL23 family. As to quaternary structure, component of the mitochondrial large ribosomal subunit (mt-LSU). Mature yeast 74S mitochondrial ribosomes consist of a small (37S) and a large (54S) subunit. The 37S small subunit contains a 15S ribosomal RNA (15S mt-rRNA) and 34 different proteins. The 54S large subunit contains a 21S rRNA (21S mt-rRNA) and 46 different proteins. uL23m forms the wall of the exit tunnel. Interacts with the C-terminus of OXA1.

Its subcellular location is the mitochondrion. Functionally, component of the mitochondrial ribosome (mitoribosome), a dedicated translation machinery responsible for the synthesis of mitochondrial genome-encoded proteins, including at least some of the essential transmembrane subunits of the mitochondrial respiratory chain. The mitoribosomes are attached to the mitochondrial inner membrane and translation products are cotranslationally integrated into the membrane. This Saccharomyces cerevisiae (strain ATCC 204508 / S288c) (Baker's yeast) protein is Large ribosomal subunit protein uL23m (MRP20).